Consider the following 427-residue polypeptide: L-glutamine:2-deoxy-scyllo-inosose aminotransferase (427 aa).

The tract at residues M1–P20 is disordered. Residue K205 is modified to N6-(pyridoxal phosphate)lysine.

Belongs to the DegT/DnrJ/EryC1 family. L-glutamine:2-deoxy-scyllo-inosose/scyllo-inosose aminotransferase subfamily. It depends on pyridoxal 5'-phosphate as a cofactor.

The enzyme catalyses 2-deoxy-L-scyllo-inosose + L-glutamine = 2-deoxy-scyllo-inosamine + 2-oxoglutaramate. It catalyses the reaction 3-amino-2,3-dideoxy-scyllo-inosose + L-glutamine = 2-deoxystreptamine + 2-oxoglutaramate. It participates in metabolic intermediate biosynthesis; 2-deoxystreptamine biosynthesis; 2-deoxystreptamine from D-glucose 6-phosphate: step 2/4. The protein operates within antibiotic biosynthesis; kanamycin biosynthesis. Its function is as follows. Catalyzes the PLP-dependent transamination of 2-deoxy-scyllo-inosose (2-DOI) to form 2-deoxy-scyllo-inosamine (2-DOIA) using L-glutamine as the amino donor. Also catalyzes the transamination of 3-amino-2,3-dideoxy-scyllo-inosose (keto-2-DOIA) into 2-deoxystreptamine (2-DOS). The chain is L-glutamine:2-deoxy-scyllo-inosose aminotransferase (kanB) from Streptomyces kanamyceticus.